A 456-amino-acid polypeptide reads, in one-letter code: Histidinol dehydrogenase homolog (456 aa).

Histidine 279 is a Zn(2+) binding site. Active-site proton acceptor residues include glutamate 347 and histidine 348. Histidine 440 lines the Zn(2+) pocket.

The protein belongs to the histidinol dehydrogenase family. Requires Zn(2+) as cofactor.

This is Histidinol dehydrogenase homolog from Rhizobium meliloti (strain 1021) (Ensifer meliloti).